Reading from the N-terminus, the 348-residue chain is tRNA N6-adenosine threonylcarbamoyltransferase (348 aa).

Fe cation is bound by residues His111 and His115. Substrate is bound by residues 134–138 (LVSGG), Asp167, Gly180, and Asn276. Asp304 contacts Fe cation.

It belongs to the KAE1 / TsaD family. The cofactor is Fe(2+).

Its subcellular location is the cytoplasm. The catalysed reaction is L-threonylcarbamoyladenylate + adenosine(37) in tRNA = N(6)-L-threonylcarbamoyladenosine(37) in tRNA + AMP + H(+). Its function is as follows. Required for the formation of a threonylcarbamoyl group on adenosine at position 37 (t(6)A37) in tRNAs that read codons beginning with adenine. Is involved in the transfer of the threonylcarbamoyl moiety of threonylcarbamoyl-AMP (TC-AMP) to the N6 group of A37, together with TsaE and TsaB. TsaD likely plays a direct catalytic role in this reaction. This chain is tRNA N6-adenosine threonylcarbamoyltransferase, found in Bordetella petrii (strain ATCC BAA-461 / DSM 12804 / CCUG 43448).